We begin with the raw amino-acid sequence, 370 residues long: Selenide, water dikinase 2 (370 aa).

Residue selenocysteine 24 is part of the active site. A non-standard amino acid (selenocysteine) is located at residue selenocysteine 24. Residues lysine 27, 55–57 (GMD), aspartate 76, and aspartate 99 contribute to the ATP site. Residue aspartate 57 participates in Mg(2+) binding. Residues aspartate 99 and aspartate 258 each coordinate Mg(2+).

This sequence belongs to the selenophosphate synthase 1 family. Class I subfamily. In terms of assembly, homodimer. Mg(2+) is required as a cofactor. First expressed in the midgut anlagen with subsequent expression in a variety of tissues including the gut and nervous system.

The enzyme catalyses hydrogenselenide + ATP + H2O = selenophosphate + AMP + phosphate + 2 H(+). Its function is as follows. Synthesizes selenophosphate from selenide and ATP. The chain is Selenide, water dikinase 2 (Sps2) from Drosophila melanogaster (Fruit fly).